Reading from the N-terminus, the 186-residue chain is Nicotinamide-nucleotide adenylyltransferase (186 aa).

The protein belongs to the archaeal NMN adenylyltransferase family.

It is found in the cytoplasm. It catalyses the reaction beta-nicotinamide D-ribonucleotide + ATP + H(+) = diphosphate + NAD(+). It participates in cofactor biosynthesis; NAD(+) biosynthesis; NAD(+) from nicotinamide D-ribonucleotide: step 1/1. This Thermococcus sibiricus (strain DSM 12597 / MM 739) protein is Nicotinamide-nucleotide adenylyltransferase.